Reading from the N-terminus, the 507-residue chain is MNLLDPFMKMTDEQEKGLSGAPSPTMSEDSAGSPCPSGSGSDTENTRPQENTFPKGEPDLKKESEEDKFPVCIREAVSQVLKGYDWTLVPMPVRVNGSSKNKPHVKRPMNAFMVWAQAARRKLADQYPHLHNAELSKTLGKLWRLLNESEKRPFVEEAERLRVQHKKDHPDYKYQPRRRKSVKNGQAEAEEATEQTHISPNAIFKALQADSPHSSSGMSEVHSPGEHSGQSQGPPTPPTTPKTDVQAGKVDLKREGRPLAEGGRQPPIDFRDVDIGELSSDVISNIETFDVNEFDQYLPPNGHPGVPATHGQVTYTGSYGISSTAPTPATAGHVWMSKQQAPPPPPQQPPQAPQAPQAPPQQQAPPQQPQAPQQQQAHTLTTLSSEPGQSQRTHIKTEQLSPSHYSEQQQHSPQQISYSPFNLPHYSPSYPPITRSQYDYADHQNSGSYYSHAAGQGSGLYSTFTYMNPAQRPMYTPIADTSGVPSIPQTHSPQHWEQPVYTQLTRP.

Disordered stretches follow at residues methionine 1–aspartate 67 and arginine 160–valine 250. Low complexity predominate over residues serine 30–serine 41. A compositionally biased stretch (polar residues) spans aspartate 42–threonine 52. 2 stretches are compositionally biased toward basic and acidic residues: residues glycine 56–aspartate 67 and arginine 160–tyrosine 174. The dimerization (DIM) stretch occupies residues glutamate 63–proline 103. The segment at glutamate 63–proline 103 is PQA. Position 64 is a phosphoserine; by PKA (serine 64). A DNA-binding region (HMG box) is located at residues valine 105 to lysine 173. At serine 211 the chain carries Phosphoserine; by PKA. The transactivation domain (TAM) stretch occupies residues proline 224–proline 307. 2 consecutive short sequence motifs (9aaTAD) follow at residues isoleucine 275–serine 284 and aspartate 290–leucine 298. A disordered region spans residues tryptophan 335–serine 429. Positions alanine 341 to proline 369 are enriched in pro residues. The segment covering histidine 378–proline 420 has biased composition (polar residues). Positions arginine 392–proline 507 are transactivation domain (TAC). Lysine 396 is covalently cross-linked (Glycyl lysine isopeptide (Lys-Gly) (interchain with G-Cter in ubiquitin)). A 9aaTAD 3 motif is present at residues serine 458–tyrosine 466. The disordered stretch occupies residues proline 477–proline 507. The span at glycine 483–proline 507 shows a compositional bias: polar residues.

As to quaternary structure, homodimer; homodimerization is required for activity. Interacts (via C-terminus) with ZNF219; forming a complex that binds to the COL2A1 promoter and activates COL2A1 expression. Interacts with DDRGK1. Interacts with EP300/p300. Interacts with beta-catenin (CTNNB1); inhibiting CTNNB1 activity by competing with the binding sites of TCF/LEF within CTNNB1. Post-translationally, acetylated; acetylation impairs nuclear localization and ability to transactivate expression of target genes. Deacetylated by SIRT1. In terms of processing, phosphorylation at Ser-64 and Ser-211 by PKA increases transcriptional activity and may help delay chondrocyte maturation downstream of PTHLH/PTHrP signaling. Phosphorylation at either Ser-64 or Ser-211 is required for sumoylation, but phosphorylation is not dependent on sumoylation. Phosphorylated on tyrosine residues; tyrosine dephosphorylation by PTPN11/SHP2 blocks SOX9 phosphorylation by PKA and subsequent SUMOylation. Sumoylated; phosphorylation at either Ser-64 or Ser-211 is required for sumoylation. Sumoylation is induced by BMP signaling pathway. Post-translationally, ubiquitinated; ubiquitination leads to proteasomal degradation and is negatively regulated by DDRGK1. Expressed in the intestinal epithelium (at protein level). Expressed in progenitor cells in various organs, including chondroprogenitors, osteoprogenitors and preadipocytes, but is not expressed in most differentiated cell types such as osteoblasts and adipocytes, with the exception of chondrocytes. Highly expressed in developing chondrogenic tissues. Also expressed in some non-chondrogenic tissues such as notochord, otic vesicle and neural tube.

It is found in the nucleus. In terms of biological role, transcription factor that plays a key role in chondrocytes differentiation and skeletal development. Specifically binds the 5'-ACAAAG-3' DNA motif present in enhancers and super-enhancers and promotes expression of genes important for chondrogenesis, including cartilage matrix protein-coding genes COL2A1, COL4A2, COL9A1, COL11A2 and ACAN, SOX5 and SOX6. Also binds to some promoter regions. Plays a central role in successive steps of chondrocyte differentiation. Absolutely required for precartilaginous condensation, the first step in chondrogenesis during which skeletal progenitors differentiate into prechondrocytes. Together with SOX5 and SOX6, required for overt chondrogenesis when condensed prechondrocytes differentiate into early stage chondrocytes, the second step in chondrogenesis. Later, required to direct hypertrophic maturation and block osteoblast differentiation of growth plate chondrocytes: maintains chondrocyte columnar proliferation, delays prehypertrophy and then prevents osteoblastic differentiation of chondrocytes by lowering beta-catenin (CTNNB1) signaling and RUNX2 expression. Also required for chondrocyte hypertrophy, both indirectly, by keeping the lineage fate of chondrocytes, and directly, by remaining present in upper hypertrophic cells and transactivating COL10A1 along with MEF2C. Low lipid levels are the main nutritional determinant for chondrogenic commitment of skeletal progenitor cells: when lipids levels are low, FOXO (FOXO1 and FOXO3) transcription factors promote expression of SOX9, which induces chondrogenic commitment and suppresses fatty acid oxidation. Mechanistically, helps, but is not required, to remove epigenetic signatures of transcriptional repression and deposit active promoter and enhancer marks at chondrocyte-specific genes. Acts in cooperation with the Hedgehog pathway-dependent GLI (GLI1 and GLI3) transcription factors. In addition to cartilage development, also acts as a regulator of proliferation and differentiation in epithelial stem/progenitor cells: involved in the lung epithelium during branching morphogenesis, by balancing proliferation and differentiation and regulating the extracellular matrix. Controls epithelial branching during kidney development. This Mus musculus (Mouse) protein is Transcription factor SOX-9.